Reading from the N-terminus, the 106-residue chain is Large ribosomal subunit protein uL24 (106 aa).

Belongs to the universal ribosomal protein uL24 family. Part of the 50S ribosomal subunit.

In terms of biological role, one of two assembly initiator proteins, it binds directly to the 5'-end of the 23S rRNA, where it nucleates assembly of the 50S subunit. Functionally, one of the proteins that surrounds the polypeptide exit tunnel on the outside of the subunit. The polypeptide is Large ribosomal subunit protein uL24 (Clostridium tetani (strain Massachusetts / E88)).